Reading from the N-terminus, the 210-residue chain is MDKSIPKATAKRLSLYYRIFKRFNTDGIEKASSKQIADALGIDSATVRRDFSYFGELGRRGFGYDVKKLMNFFAEILNDHSTTNVMLVGCGNIGRALLHYRFHDRNKMQISMAFDLDSNDLVGKTTEDGIPVYGISTINDHLIDSDIETAILTVPSTEAQEVADILVKAGIKGILSFSPVHLTLPKDIIVQYVDLTSELQTLLYFMNQQQ.

The segment at residues 15–54 (LYYRIFKRFNTDGIEKASSKQIADALGIDSATVRRDFSYF) is a DNA-binding region (H-T-H motif). 89–94 (GCGNIG) contributes to the NAD(+) binding site.

This sequence belongs to the transcriptional regulatory Rex family. In terms of assembly, homodimer.

Its subcellular location is the cytoplasm. In terms of biological role, modulates transcription in response to changes in cellular NADH/NAD(+) redox state. In Streptococcus agalactiae serotype Ia (strain ATCC 27591 / A909 / CDC SS700), this protein is Redox-sensing transcriptional repressor Rex.